A 214-amino-acid polypeptide reads, in one-letter code: Pyridoxine/pyridoxamine 5'-phosphate oxidase (214 aa).

Substrate-binding positions include 9-12 and Lys-67; that span reads RKDY. FMN contacts are provided by residues 62-67, 77-78, Arg-83, Lys-84, and Gln-106; these read RMVLLK and FT. Positions 124, 128, and 132 each coordinate substrate. Residues 141-142 and Trp-186 contribute to the FMN site; that span reads QS. Substrate is bound at residue 192 to 194; sequence RLH. Arg-196 is an FMN binding site.

It belongs to the pyridoxamine 5'-phosphate oxidase family. In terms of assembly, homodimer. FMN serves as cofactor.

The catalysed reaction is pyridoxamine 5'-phosphate + O2 + H2O = pyridoxal 5'-phosphate + H2O2 + NH4(+). It catalyses the reaction pyridoxine 5'-phosphate + O2 = pyridoxal 5'-phosphate + H2O2. It functions in the pathway cofactor metabolism; pyridoxal 5'-phosphate salvage; pyridoxal 5'-phosphate from pyridoxamine 5'-phosphate: step 1/1. Its pathway is cofactor metabolism; pyridoxal 5'-phosphate salvage; pyridoxal 5'-phosphate from pyridoxine 5'-phosphate: step 1/1. Its function is as follows. Catalyzes the oxidation of either pyridoxine 5'-phosphate (PNP) or pyridoxamine 5'-phosphate (PMP) into pyridoxal 5'-phosphate (PLP). In Trichormus variabilis (strain ATCC 29413 / PCC 7937) (Anabaena variabilis), this protein is Pyridoxine/pyridoxamine 5'-phosphate oxidase.